The following is an 81-amino-acid chain: ATP synthase subunit c, chloroplastic (81 aa).

2 helical membrane-spanning segments follow: residues alanine 7–glycine 27 and leucine 57–alanine 77.

It belongs to the ATPase C chain family. As to quaternary structure, F-type ATPases have 2 components, F(1) - the catalytic core - and F(0) - the membrane proton channel. F(1) has five subunits: alpha(3), beta(3), gamma(1), delta(1), epsilon(1). F(0) has four main subunits: a(1), b(1), b'(1) and c(10-14). The alpha and beta chains form an alternating ring which encloses part of the gamma chain. F(1) is attached to F(0) by a central stalk formed by the gamma and epsilon chains, while a peripheral stalk is formed by the delta, b and b' chains.

Its subcellular location is the plastid. It localises to the chloroplast thylakoid membrane. Functionally, f(1)F(0) ATP synthase produces ATP from ADP in the presence of a proton or sodium gradient. F-type ATPases consist of two structural domains, F(1) containing the extramembraneous catalytic core and F(0) containing the membrane proton channel, linked together by a central stalk and a peripheral stalk. During catalysis, ATP synthesis in the catalytic domain of F(1) is coupled via a rotary mechanism of the central stalk subunits to proton translocation. Key component of the F(0) channel; it plays a direct role in translocation across the membrane. A homomeric c-ring of between 10-14 subunits forms the central stalk rotor element with the F(1) delta and epsilon subunits. In Arabis hirsuta (Hairy rock-cress), this protein is ATP synthase subunit c, chloroplastic.